A 249-amino-acid chain; its full sequence is Isoamyl acetate-hydrolyzing esterase 1 homolog (249 aa).

Serine 24 functions as the Nucleophile in the catalytic mechanism. An N6-succinyllysine modification is found at lysine 63. Aspartate 197 serves as the catalytic Proton donor. Residue histidine 200 is the Proton acceptor of the active site.

Belongs to the 'GDSL' lipolytic enzyme family. IAH1 subfamily.

Functionally, probable lipase. The chain is Isoamyl acetate-hydrolyzing esterase 1 homolog (Iah1) from Mus musculus (Mouse).